We begin with the raw amino-acid sequence, 499 residues long: MAQDTALHLPLGLEPAGWALALLTSSIIYLFLSPKSKSPRFPVVNKYWWDFFQAKAKRDFEAGAEDLIKLGLSKARTKPRREYPRLVLSDQLADAVGMDNRFDQDKGIAPVNLVTLKGFESMYAGALHDSVPRPATSATSKRLVHLTRPFSEETTDFLQREWTESPDWHDIEVYPVISRLTAQVLSRAFVGPRLCRDTRWLEIATTYISNRLTAVVAVQKWGAVLHPIVHWFLPSCRRLRAQNKRARELLQPELDRIKESPLEDETFTSLAWIHGYGQGYIYDPGLAQLRLSAVANHTTSDMMTKTLIRICENPELIQPLREEAIEAVRGGGLRVAALQKMFLMESVMQESQRLEPFILLSMFRYATETVTLPEGTTIPKGTLLAIANPSRLDPAIYPDPHKFDGYRFVRMREDPRHAHLAPFTKTNSTNLNFGHGKQACPGRFIAVNQIKIALCHMLLKYDIELVEECPSQLVRSGLVTVRNPGAKIRVRRRQEEVCL.

Residues 11–31 (LGLEPAGWALALLTSSIIYLF) traverse the membrane as a helical segment. 2 N-linked (GlcNAc...) asparagine glycosylation sites follow: asparagine 296 and asparagine 427. Position 440 (cysteine 440) interacts with heme.

The protein belongs to the cytochrome P450 family. Heme serves as cofactor.

Its subcellular location is the membrane. Its pathway is alkaloid biosynthesis. Cytochrome P450 monooxygenase; part of the gene cluster that mediates the biosynthesis of notoamide, a fungal indole alkaloid that belongs to a family of natural products containing a characteristic bicyclo[2.2.2]diazaoctane core. The first step of notoamide biosynthesis involves coupling of L-proline and L-tryptophan by the bimodular NRPS notE', to produce cyclo-L-tryptophan-L-proline called brevianamide F. The reverse prenyltransferase notF' then acts as a deoxybrevianamide E synthase and converts brevianamide F to deoxybrevianamide E via reverse prenylation at C-2 of the indole ring leading to the bicyclo[2.2.2]diazaoctane core. Deoxybrevianamide E is further hydroxylated at C-6 of the indole ring, likely catalyzed by the cytochrome P450 monooxygenase notG', to yield 6-hydroxy-deoxybrevianamide E. 6-hydroxy-deoxybrevianamide E is a specific substrate of the prenyltransferase notC' for normal prenylation at C-7 to produce 6-hydroxy-7-prenyl-deoxybrevianamide, also called notoamide S. As the proposed pivotal branching point in notoamide biosynthesis, notoamide S can be diverted to notoamide E through an oxidative pyran ring closure putatively catalyzed by either notH' cytochrome P450 monooxygenase or the notD' FAD-linked oxidoreductase. This step would be followed by an indole 2,3-epoxidation-initiated pinacol-like rearrangement catalyzed by the notB' FAD-dependent monooxygenase leading to the formation of notoamide C and notoamide D. On the other hand notoamide S is converted to notoamide T by notH' (or notD'), a bifunctional oxidase that also functions as the intramolecular Diels-Alderase responsible for generation of (-)-notoamide T. To generate antipodal (+)-notoaminide T, notH (or notD) in Aspergillus strain MF297-2 is expected to catalyze a Diels-Alder reaction leading to the opposite stereochemistry. The remaining oxidoreductase notD' (or notH') likely catalyzes the oxidative pyran ring formation to yield (-)-stephacidin A. The FAD-dependent monooxygenase notI' is highly similar to notB' and is predicted to catalyze a similar conversion from (-)-stephacidin A to (+)-notoamide B via the 2,3-epoxidation of (-)-stephacidin A followed by a pinacol-type rearrangement. Finally, it remains unclear which enzyme could be responsible for the final hydroxylation steps leading to notoamide A and sclerotiamide. The protein is Cytochrome P450 monooxygenase notH' of Aspergillus versicolor.